The primary structure comprises 375 residues: Beta sliding clamp (375 aa).

Belongs to the beta sliding clamp family. In terms of assembly, forms a ring-shaped head-to-tail homodimer around DNA which binds and tethers DNA polymerases and other proteins to the DNA. The DNA replisome complex has a single clamp-loading complex (3 tau and 1 each of delta, delta', psi and chi subunits) which binds 3 Pol III cores (1 core on the leading strand and 2 on the lagging strand) each with a beta sliding clamp dimer. Additional proteins in the replisome are other copies of gamma, psi and chi, Ssb, DNA helicase and RNA primase.

The protein localises to the cytoplasm. Confers DNA tethering and processivity to DNA polymerases and other proteins. Acts as a clamp, forming a ring around DNA (a reaction catalyzed by the clamp-loading complex) which diffuses in an ATP-independent manner freely and bidirectionally along dsDNA. Initially characterized for its ability to contact the catalytic subunit of DNA polymerase III (Pol III), a complex, multichain enzyme responsible for most of the replicative synthesis in bacteria; Pol III exhibits 3'-5' exonuclease proofreading activity. The beta chain is required for initiation of replication as well as for processivity of DNA replication. The sequence is that of Beta sliding clamp (dnaN) from Mycoplasma capricolum subsp. capricolum (strain California kid / ATCC 27343 / NCTC 10154).